We begin with the raw amino-acid sequence, 412 residues long: Branched-chain alpha-ketoacid dehydrogenase kinase (412 aa).

The transit peptide at 1 to 30 (MILASVLGSGPRGGPPLRPLLGPALSLRAR) directs the protein to the mitochondrion. A Phosphoserine modification is found at S31. Position 52 is a phosphoserine; by autocatalysis (S52). Residues 159–404 (LDDHKDVVTL…DVYLRLRHID (246 aa)) form the Histidine kinase domain. N6-acetyllysine is present on residues K192 and K233. ATP contacts are provided by N279 and D315. N279 contacts Mg(2+). K(+)-binding residues include V328, D330, and F333. 2 residues coordinate ATP: T334 and T335. S356 and S360 each carry phosphoserine. Residues H364, G367, and L370 each contribute to the ATP site. A K(+)-binding site is contributed by G367.

It belongs to the PDK/BCKDK protein kinase family. Homodimer. Homotetramer. Dimerizes through interaction of two opposing nucleotide-binding domains. Interacts with E2 component of the branched-chain alpha-ketoacid dehydrogenase (BCKDH) complex. Competes with BCKDK for binding to the E2 component; this interaction is modulated by branched-chain alpha-keto acids. At steady state, BCKDH holoenzyme contains BCKDK and BCKDHA is phosphorylated. In response to high levels of branched-chain alpha-keto acids, the inhibitory BCKDK is replaced by activating PPM1K leading to BCKDHA dephosphorylation and BCAA degradation. Post-translationally, autophosphorylated.

Its subcellular location is the mitochondrion matrix. The protein localises to the mitochondrion. It carries out the reaction L-seryl-[3-methyl-2-oxobutanoate dehydrogenase] + ATP = O-phospho-L-seryl-[3-methyl-2-oxobutanoate dehydrogenase] + ADP + H(+). The catalysed reaction is L-seryl-[protein] + ATP = O-phospho-L-seryl-[protein] + ADP + H(+). Serine/threonine-protein kinase component of macronutrients metabolism. Forms a functional kinase and phosphatase pair with PPM1K, serving as a metabolic regulatory node that coordinates branched-chain amino acids (BCAAs) with glucose and lipid metabolism via two distinct phosphoprotein targets: mitochondrial BCKDHA subunit of the branched-chain alpha-ketoacid dehydrogenase (BCKDH) complex and cytosolic ACLY, a lipogenic enzyme of Krebs cycle. Phosphorylates and inactivates mitochondrial BCKDH complex a multisubunit complex consisting of three multimeric components each involved in different steps of BCAA catabolism: E1 composed of BCKDHA and BCKDHB, E2 core composed of DBT monomers, and E3 composed of DLD monomers. Associates with the E2 component of BCKDH complex and phosphorylates BCKDHA on Ser-347, leading to conformational changes that interrupt substrate channeling between E1 and E2 and inactivates the BCKDH complex. Phosphorylates ACLY on Ser-455 in response to changes in cellular carbohydrate abundance such as occurs during fasting to feeding metabolic transition. Refeeding stimulates MLXIPL/ChREBP transcription factor, leading to increased BCKDK to PPM1K expression ratio, phosphorylation and activation of ACLY that ultimately results in the generation of malonyl-CoA and oxaloacetate immediate substrates of de novo lipogenesis and glucogenesis, respectively. Recognizes phosphosites having SxxE/D canonical motif. The polypeptide is Branched-chain alpha-ketoacid dehydrogenase kinase (BCKDK) (Bos taurus (Bovine)).